The sequence spans 441 residues: Importin subunit alpha-8 (441 aa).

8 ARM repeats span residues 39–79 (QRDI…NIAV), 80–118 (DNPG…NVAG), 121–158 (IHYR…NLCR), 160–199 (KPHP…HLSE), 202–241 (EDGI…AMTA), 244–284 (HQQT…NITA), 287–326 (KEQI…NMAL), and 330–370 (HDQI…NMLK).

This sequence belongs to the importin alpha family. In terms of assembly, forms a complex with importin subunit beta-1.

The protein resides in the nucleus envelope. Functionally, binds to conventional NLS motifs and mediates nuclear protein import across the nuclear envelope. The chain is Importin subunit alpha-8 from Arabidopsis thaliana (Mouse-ear cress).